Consider the following 2288-residue polypeptide: Protein Ycf2 (2288 aa).

1629–1636 contacts ATP; sequence GSIGTGRS.

Belongs to the Ycf2 family.

It is found in the plastid. Its subcellular location is the chloroplast stroma. Its function is as follows. Probable ATPase of unknown function. Its presence in a non-photosynthetic plant (Epifagus virginiana) and experiments in tobacco indicate that it has an essential function which is probably not related to photosynthesis. In Phaseolus vulgaris (Kidney bean), this protein is Protein Ycf2.